Here is a 77-residue protein sequence, read N- to C-terminus: U14-theraphotoxin-Cg1c (77 aa).

The first 21 residues, 1–21 (MNTSDPPAVLRIAAITLLCTA), serve as a signal peptide directing secretion. A propeptide spanning residues 22-49 (SESVEQNPLIPFENAVLGSYAKMASEKR) is cleaved from the precursor. 2 disulfide bridges follow: C50/C64 and C57/C69.

Belongs to the neurotoxin 10 (Hwtx-1) family. 65 (Jztx-21) subfamily. In terms of tissue distribution, expressed by the venom gland.

It is found in the secreted. Functionally, probable ion channel inhibitor. This chain is U14-theraphotoxin-Cg1c, found in Chilobrachys guangxiensis (Chinese earth tiger tarantula).